Reading from the N-terminus, the 476-residue chain is Alkaline phosphatase H (476 aa).

The signal sequence occupies residues 1-26 (MTPGYPLALSLAVSMAVLGSALPAQA). A Mg(2+)-binding site is contributed by Asp77. A Zn(2+)-binding site is contributed by Asp77. Residue Ser128 is the Phosphoserine intermediate of the active site. Ser128 carries the post-translational modification Phosphoserine. Asp179 and Thr181 together coordinate Mg(2+). Ser206 carries the post-translational modification Phosphoserine. Gln346 lines the Mg(2+) pocket. The Zn(2+) site is built by Asp353, His357, Asp395, His396, and His438.

The protein belongs to the alkaline phosphatase family. The cofactor is Mg(2+). Zn(2+) is required as a cofactor.

It localises to the secreted. Its subcellular location is the periplasm. It carries out the reaction a phosphate monoester + H2O = an alcohol + phosphate. Functionally, has only phosphomonoesterase activity. This Pseudomonas aeruginosa (strain UCBPP-PA14) protein is Alkaline phosphatase H (phoA).